Consider the following 478-residue polypeptide: MAKDKKFVEDITPMDEDFAQWYTDIVKKAELADYSSIRGCMIIRPNGYAIWENIQKYVDTKLKEYGHENVSMPIFIPENLLQKEKDHVEGFAPEVAWVTHGGDDELAERLCVRPTSETLFCEHYAKIVQSYKDLPKLYNQWCSVVRWEKTTRPFLRTTEFLWQEGHTIHETKEEAESHSLKILNMYSRLCEDMLAMPVVMGKKTDKEKFAGADDTYTIESLMHDGKALQAGTSHYLGQNFSKAFAIQFSDRNGKLDYPHYTTWAVTTRLIGAIIMVHGDNSGLKLPPRIAPTQAVIIPVAQHKEGVLEKAEELKERLAKVVRVKLDDSDKMPGWKYSEYEMKGIPLRIEIGPKDIEKNQAVLVRRDNREKTIVSLDEIEIKVQEMLDIIHNSMLEEAKKTRDEKTYVATNMEEFEDTIENKPGFIKAMWCGDKACEDKIREVTGATSRCMPFEQEVVSDTCVCCGKKAKNLVYWGRAY.

This sequence belongs to the class-II aminoacyl-tRNA synthetase family. ProS type 3 subfamily. As to quaternary structure, homodimer.

Its subcellular location is the cytoplasm. It catalyses the reaction tRNA(Pro) + L-proline + ATP = L-prolyl-tRNA(Pro) + AMP + diphosphate. Functionally, catalyzes the attachment of proline to tRNA(Pro) in a two-step reaction: proline is first activated by ATP to form Pro-AMP and then transferred to the acceptor end of tRNA(Pro). This chain is Proline--tRNA ligase, found in Clostridium botulinum (strain Okra / Type B1).